The primary structure comprises 422 residues: Probable protease eep (422 aa).

A Zn(2+)-binding site is contributed by H18. Residue E19 is part of the active site. Residue H22 participates in Zn(2+) binding. The next 3 membrane-spanning stretches (helical) occupy residues 176 to 196 (FAGPMNNFILGFILFTLAVFL), 349 to 369 (VVFLMAMLSMNLGIINLLPIP), and 394 to 414 (EGIITLIGFGFVMVLMVLVTW). The PDZ domain occupies 179 to 273 (PMNNFILGFI…EEQLTVTPEK (95 aa)).

Belongs to the peptidase M50B family. Zn(2+) is required as a cofactor.

It localises to the cell membrane. In terms of biological role, involved in production of the peptide pheromone cAD1. This is Probable protease eep (eep) from Enterococcus faecalis (strain ATCC 700802 / V583).